Reading from the N-terminus, the 113-residue chain is Putative pterin-4-alpha-carbinolamine dehydratase (113 aa).

This sequence belongs to the pterin-4-alpha-carbinolamine dehydratase family.

It carries out the reaction (4aS,6R)-4a-hydroxy-L-erythro-5,6,7,8-tetrahydrobiopterin = (6R)-L-erythro-6,7-dihydrobiopterin + H2O. The protein is Putative pterin-4-alpha-carbinolamine dehydratase of Legionella pneumophila (strain Paris).